The sequence spans 157 residues: Eukaryotic translation initiation factor 5A-1 (157 aa).

Residue S2 is modified to N-acetylserine. S2 is modified (phosphoserine). Phosphothreonine is present on residues T7 and T10. Position 51 is a hypusine (K51). S74 is modified (phosphoserine). K86 is covalently cross-linked (Glycyl lysine isopeptide (Lys-Gly) (interchain with G-Cter in ubiquitin)).

Belongs to the eIF-5A family. In terms of assembly, homodimer. Binds to 80S ribosomes. Actively translating ribosomes show mutually exclusive binding of eIF5a (HYP2 or ANB1) and EFT1/eEF2. Interacts with DYS1 and LIA1. Post-translationally, lys-51 undergoes hypusination, a unique post-translational modification that consists in the addition of a butylamino group from spermidine to lysine side chain, leading to the formation of the unusual amino acid hypusine. eIF-5As are the only known proteins to undergo this modification, which is essential for their function.

The protein resides in the cytoplasm. Its function is as follows. Translation factor that promotes translation elongation and termination, particularly upon ribosome stalling at specific amino acid sequence contexts. Binds between the exit (E) and peptidyl (P) site of the ribosome and promotes rescue of stalled ribosome: specifically required for efficient translation of polyproline-containing peptides as well as other motifs that stall the ribosome. Acts as a ribosome quality control (RQC) cofactor by joining the RQC complex to facilitate peptidyl transfer during CAT tailing step. Involved in actin dynamics and cell cycle progression, mRNA decay and probably in a pathway involved in stress response and maintenance of cell wall integrity. The chain is Eukaryotic translation initiation factor 5A-1 (HYP2) from Saccharomyces cerevisiae (strain ATCC 204508 / S288c) (Baker's yeast).